The sequence spans 358 residues: CRS2-associated factor 2, mitochondrial (358 aa).

A mitochondrion-targeting transit peptide spans 1–28 (MLSIRRSLTLAKEPKDLFLFLCNLRARC). The disordered stretch occupies residues 35–64 (DPPFSPLSKPTKPPKEKKKQKTKKQDQSSE). CRM domains are found at residues 141-239 (ETLT…SRPI) and 261-357 (DGLE…ELVT).

In terms of assembly, part of large ribonucleo-protein complexes that include group IIB introns.

It is found in the mitochondrion. Functionally, may be involved in the splicing of group IIB introns in mitochondria. This chain is CRS2-associated factor 2, mitochondrial, found in Arabidopsis thaliana (Mouse-ear cress).